Here is a 248-residue protein sequence, read N- to C-terminus: Anamorsin homolog (248 aa).

The N-terminal SAM-like domain stretch occupies residues phenylalanine 4–phenylalanine 129. The tract at residues alanine 130–lysine 161 is linker. The [2Fe-2S] cluster site is built by cysteine 172, cysteine 181, cysteine 184, and cysteine 186. Residues cysteine 172–cysteine 186 are fe-S binding site A. Positions 209, 212, 220, and 223 each coordinate [4Fe-4S] cluster. 2 short sequence motifs (cx2C motif) span residues cysteine 209–cysteine 212 and cysteine 220–cysteine 223. A fe-S binding site B region spans residues cysteine 209 to cysteine 223.

This sequence belongs to the anamorsin family. As to quaternary structure, monomer. The cofactor is [2Fe-2S] cluster. Requires [4Fe-4S] cluster as cofactor.

It localises to the cytoplasm. Its subcellular location is the mitochondrion intermembrane space. In terms of biological role, component of the cytosolic iron-sulfur (Fe-S) protein assembly (CIA) machinery. Required for the maturation of extramitochondrial Fe-S proteins. Part of an electron transfer chain functioning in an early step of cytosolic Fe-S biogenesis, facilitating the de novo assembly of a [4Fe-4S] cluster on the cytosolic Fe-S scaffold complex. Electrons are transferred from NADPH via a FAD- and FMN-containing diflavin oxidoreductase. Together with the diflavin oxidoreductase, also required for the assembly of the diferric tyrosyl radical cofactor of ribonucleotide reductase (RNR), probably by providing electrons for reduction during radical cofactor maturation in the catalytic small subunit. The protein is Anamorsin homolog of Drosophila ananassae (Fruit fly).